A 223-amino-acid polypeptide reads, in one-letter code: Uridylate kinase (223 aa).

Position 9 to 10 (9 to 10 (GS)) interacts with ATP. A UMP-binding site is contributed by G42. Residues G43 and R47 each contribute to the ATP site. Residues D64 and 112 to 118 (VSPGQTT) contribute to the UMP site. ATP contacts are provided by T138, Y144, and D147.

Belongs to the UMP kinase family. As to quaternary structure, homohexamer.

Its subcellular location is the cytoplasm. The catalysed reaction is UMP + ATP = UDP + ADP. The protein operates within pyrimidine metabolism; CTP biosynthesis via de novo pathway; UDP from UMP (UMPK route): step 1/1. Inhibited by UTP. Catalyzes the reversible phosphorylation of UMP to UDP. This Methanothrix thermoacetophila (strain DSM 6194 / JCM 14653 / NBRC 101360 / PT) (Methanosaeta thermophila) protein is Uridylate kinase.